Consider the following 176-residue polypeptide: MMFTKLFQQWSFAVFLLSYSVPSYGRSVEGISRRLKRAVSEHQLLHDKGKSIQDLRRRIFLQNLIEGVNTAEIRATSEVSPNPKPATNTKNYPVRFGSEDEGRYLTQETNKSQTYKEQPLKVSGKKKKAKPGKRKEQEKKKRRARSAWLNSGMYGSNVTESPVLDNSVTTHNHILR.

Residues 1 to 25 (MMFTKLFQQWSFAVFLLSYSVPSYG) form the signal peptide. A propeptide spanning residues 26–37 (RSVEGISRRLKR) is cleaved from the precursor. The important for receptor binding stretch occupies residues 58–69 (RIFLQNLIEGVN). The interval 76–157 (TSEVSPNPKP…WLNSGMYGSN (82 aa)) is disordered. Polar residues-rich tracts occupy residues 77 to 91 (SEVS…NTKN) and 106 to 116 (TQETNKSQTYK). The Nuclear localization signal signature appears at 109–130 (TNKSQTYKEQPLKVSGKKKKAK). Basic residues predominate over residues 123–133 (SGKKKKAKPGK).

This sequence belongs to the parathyroid hormone family.

The protein resides in the secreted. Its subcellular location is the cytoplasm. The protein localises to the nucleus. Neuroendocrine peptide which is a critical regulator of cellular and organ growth, development, migration, differentiation and survival and of epithelial calcium ion transport. Acts by binding to its receptor, PTH1R, activating G protein-coupled receptor signaling. Regulates endochondral bone development and epithelial-mesenchymal interactions during the formation of the mammary glands and teeth. Required for skeletal homeostasis. In terms of biological role, potent inhibitor of osteoclastic bone resorption. This Gallus gallus (Chicken) protein is Parathyroid hormone-related protein (PTHLH).